We begin with the raw amino-acid sequence, 513 residues long: Probable G-protein coupled receptor 176 (513 aa).

The interval 1–25 is disordered; sequence MGHNGSWVSPNTSHPRNTSGAQAGA. Topologically, residues 1-41 are extracellular; the sequence is MGHNGSWVSPNTSHPRNTSGAQAGANSSAFGELSEAQLYRQ. N-linked (GlcNAc...) asparagine glycosylation is found at Asn4, Asn11, Asn17, and Asn26. A helical transmembrane segment spans residues 42 to 64; it reads FTTTVQVVIFIGSLLGNFTVLWS. Residues 65–77 lie on the Cytoplasmic side of the membrane; the sequence is TCRTTVFKSVTNR. Residues 78–98 traverse the membrane as a helical segment; sequence FIKNLACSGICASVVCVPFDI. Residues 99–108 are Extracellular-facing; it reads ILSTSPHCCW. A helical transmembrane segment spans residues 109 to 129; that stretch reads WIYTMLFCKVLKFLHKVFCSV. Topologically, residues 130-157 are cytoplasmic; sequence TVLSFPAIALDRYYSVLYPLERKISDAK. The chain crosses the membrane as a helical span at residues 158–177; the sequence is SRELVMYIWAHAVVASVPVF. The Extracellular segment spans residues 178-204; that stretch reads AVTNVADIYATSTCTEVWSNSLGHLVY. Residues 205-225 traverse the membrane as a helical segment; sequence VLIYNVTTVIVPVAVVFLFLI. Residues 226-264 are Cytoplasmic-facing; it reads LIRRALSASQKKKVIIAALRTPQNTISIPYASQREAELH. Residues 265 to 285 traverse the membrane as a helical segment; it reads ATLLSMVTVFILCSVPYATLV. The Extracellular portion of the chain corresponds to 286-301; the sequence is VYQTVLNVPNTSVFLL. The helical transmembrane segment at 302 to 322 threads the bilayer; the sequence is LTAIWLPKVSLLANPVLFLTV. Residues 323–513 are Cytoplasmic-facing; that stretch reads NRSVRKCLVG…KVSIFPKVDS (191 aa). Residues 404–432 are disordered; that stretch reads VLTSSPEGEESQLAPSVPPPGTVDSVSRV.

This sequence belongs to the G-protein coupled receptor 1 family. In terms of tissue distribution, expressed in brain, lung, heart, stomach, intestine, cultured aortic smooth muscle cells and cardiac myocytes.

It localises to the cell membrane. In terms of biological role, orphan receptor involved in normal circadian rhythm behavior. Acts through the G-protein subclass G(z)-alpha and has an agonist-independent basal activity to repress cAMP production. This is Probable G-protein coupled receptor 176 (Gpr176) from Rattus norvegicus (Rat).